The primary structure comprises 446 residues: ATP-dependent RNA helicase SUB2 (446 aa).

At serine 2 the chain carries N-acetylserine. Phosphoserine is present on residues serine 13 and serine 37. The segment covering 23–41 (ASKAAEAGETGAATSATEG) has biased composition (low complexity). Residues 23-52 (ASKAAEAGETGAATSATEGDNNNNTAAGDK) are disordered. Positions 62–90 (TGFKDFLLKPELSRAIIDCGFEHPSEVQQ) match the Q motif motif. The 176-residue stretch at 93–268 (IPQSIHGTDV…RRFLQNPLEI (176 aa)) folds into the Helicase ATP-binding domain. 106 to 113 (AKSGLGKT) serves as a coordination point for ATP. A Phosphothreonine modification is found at threonine 169. Positions 215 to 218 (DECD) match the DECD box motif. One can recognise a Helicase C-terminal domain in the interval 280–441 (GLQQYYIKLE…EFPEEGIDPS (162 aa)).

It belongs to the DEAD box helicase family. DECD subfamily. Component of the TREX complex composed of at least SUB2, TEX1, YRA1 and the four THO complex components: HPR1, MFT1, THO2 and THP1. Interacts with HPR1, YRA1, and YRA2. SUB2 may mediate the interaction between the THO complex and YRA1. Associates with growing mRNP complexes during transcription. This association requires the presence of HPR1. Also interacts with SAC3. Interacts with THO1 in the presence of RNA; this interaction facilitates RNA binding of SUB2.

The protein resides in the nucleus. The catalysed reaction is ATP + H2O = ADP + phosphate + H(+). In terms of biological role, ATP-binding RNA helicase component of the TREX complex involved in transcription elongation and required for the export of mRNA out of the nucleus. SUB2 also plays a role in pre-mRNA splicing and spliceosome assembly. May be involved in rDNA and telomeric silencing, and maintenance of genome integrity. Associates with THO1, which facilitates RNA binding of SUB2 and likely plays a role in mRNA export. The sequence is that of ATP-dependent RNA helicase SUB2 (SUB2) from Saccharomyces cerevisiae (strain ATCC 204508 / S288c) (Baker's yeast).